We begin with the raw amino-acid sequence, 337 residues long: Ferrochelatase (337 aa).

Fe cation-binding residues include His-189 and Glu-293.

The protein belongs to the ferrochelatase family.

Its subcellular location is the cytoplasm. The enzyme catalyses heme b + 2 H(+) = protoporphyrin IX + Fe(2+). Its pathway is porphyrin-containing compound metabolism; protoheme biosynthesis; protoheme from protoporphyrin-IX: step 1/1. Its function is as follows. Catalyzes the ferrous insertion into protoporphyrin IX. This chain is Ferrochelatase, found in Pseudomonas putida (strain W619).